We begin with the raw amino-acid sequence, 680 residues long: DNA ligase (680 aa).

Residue Asp32–Asp36 participates in NAD(+) binding. Residues Gln47 to Pro66 are disordered. NAD(+)-binding positions include Ser81–Leu82 and Glu115. The N6-AMP-lysine intermediate role is filled by Lys117. Residues Arg138, Glu175, Lys291, and Lys315 each contribute to the NAD(+) site. The Zn(2+) site is built by Cys409, Cys412, Cys427, and Cys432. The region spanning Asp602–Pro680 is the BRCT domain.

Belongs to the NAD-dependent DNA ligase family. LigA subfamily. Requires Mg(2+) as cofactor. It depends on Mn(2+) as a cofactor.

It catalyses the reaction NAD(+) + (deoxyribonucleotide)n-3'-hydroxyl + 5'-phospho-(deoxyribonucleotide)m = (deoxyribonucleotide)n+m + AMP + beta-nicotinamide D-nucleotide.. Functionally, DNA ligase that catalyzes the formation of phosphodiester linkages between 5'-phosphoryl and 3'-hydroxyl groups in double-stranded DNA using NAD as a coenzyme and as the energy source for the reaction. It is essential for DNA replication and repair of damaged DNA. This Synechococcus sp. (strain CC9605) protein is DNA ligase.